The following is a 178-amino-acid chain: Ribosome maturation factor RimM (178 aa).

One can recognise a PRC barrel domain in the interval 103 to 177 (SKDEYYFFEI…KIVVKVPEWL (75 aa)).

This sequence belongs to the RimM family. In terms of assembly, binds ribosomal protein uS19.

Its subcellular location is the cytoplasm. Its function is as follows. An accessory protein needed during the final step in the assembly of 30S ribosomal subunit, possibly for assembly of the head region. Essential for efficient processing of 16S rRNA. May be needed both before and after RbfA during the maturation of 16S rRNA. It has affinity for free ribosomal 30S subunits but not for 70S ribosomes. This is Ribosome maturation factor RimM from Thermosipho africanus (strain TCF52B).